A 276-amino-acid polypeptide reads, in one-letter code: HUWE1-associated protein modifying stress responses 2 (276 aa).

3 disordered regions span residues 146-182 (GKVP…TPVG), 204-238 (ISMR…PNSL), and 252-276 (VRKR…NRMV). A compositionally biased stretch (pro residues) spans 149-165 (PPTPQPPRTPRMSPRPP). Low complexity-rich tracts occupy residues 166 to 179 (AAAS…ESGT) and 208 to 219 (SGPPGSSSQDGG). Residues 252 to 276 (VRKRTSAQFGDGSADSPLHKRNRMV) are nuclear localization signal.

It belongs to the HAPSTR1 family. Homooligomer. Heterooligomer with HAPSTR1; the interaction is direct and stabilizes HAPSTR1 independently of HUWE1. Interacts with HUWE1.

It localises to the nucleus. Together with HAPSTR1 plays a central regulatory role in the cellular response to molecular stressors, such as DNA damage, nutrient scarcity, and protein misfolding. Regulates these multiple stress response signaling pathways by stabilizing HAPSTR1, but also independently of HAPSTR1. The polypeptide is HUWE1-associated protein modifying stress responses 2 (Mus musculus (Mouse)).